A 354-amino-acid polypeptide reads, in one-letter code: tRNA N6-adenosine threonylcarbamoyltransferase (354 aa).

Positions 115 and 119 each coordinate Fe cation. Residues 138 to 142, Asp171, Gly184, and Asn276 contribute to the substrate site; that span reads LVSGG. Position 304 (Asp304) interacts with Fe cation.

Belongs to the KAE1 / TsaD family. Fe(2+) serves as cofactor.

It localises to the cytoplasm. It carries out the reaction L-threonylcarbamoyladenylate + adenosine(37) in tRNA = N(6)-L-threonylcarbamoyladenosine(37) in tRNA + AMP + H(+). Its function is as follows. Required for the formation of a threonylcarbamoyl group on adenosine at position 37 (t(6)A37) in tRNAs that read codons beginning with adenine. Is involved in the transfer of the threonylcarbamoyl moiety of threonylcarbamoyl-AMP (TC-AMP) to the N6 group of A37, together with TsaE and TsaB. TsaD likely plays a direct catalytic role in this reaction. The protein is tRNA N6-adenosine threonylcarbamoyltransferase of Xanthomonas campestris pv. campestris (strain 8004).